A 213-amino-acid polypeptide reads, in one-letter code: Uridine kinase (213 aa).

ATP is bound at residue 14–21 (GASASGKS).

This sequence belongs to the uridine kinase family.

The protein localises to the cytoplasm. The catalysed reaction is uridine + ATP = UMP + ADP + H(+). The enzyme catalyses cytidine + ATP = CMP + ADP + H(+). It functions in the pathway pyrimidine metabolism; CTP biosynthesis via salvage pathway; CTP from cytidine: step 1/3. Its pathway is pyrimidine metabolism; UMP biosynthesis via salvage pathway; UMP from uridine: step 1/1. The protein is Uridine kinase of Vibrio campbellii (strain ATCC BAA-1116).